Consider the following 339-residue polypeptide: NADP-dependent dehydrogenase M3 (339 aa).

7 residues coordinate NADP(+): Ser-49, Ile-51, Asp-93, Tyr-206, Lys-210, Ile-240, and Gln-244. Residue Tyr-206 is the Proton acceptor of the active site. Catalysis depends on Lys-210, which acts as the Lowers pKa of active site Tyr.

The protein belongs to the short-chain dehydrogenases/reductases (SDR) family. In terms of assembly, homodimer.

It is found in the cytoplasm. Its subcellular location is the cytosol. It participates in secondary metabolite biosynthesis. NADP-dependent dehydrogenase; part of the gene cluster that mediates the biosynthesis of squalestatin S1 (SQS1, also known as zaragozic acid A), a heavily oxidized fungal polyketide that offers potent cholesterol lowering activity by targeting squalene synthase (SS). SQS1 is composed of a 2,8-dioxobicyclic[3.2.1]octane-3,4,5-tricarboxyclic acid core that is connected to two lipophilic polyketide arms. These initial steps feature the priming of an unusual benzoic acid starter unit onto the highly reducing polyketide synthase pks2, followed by oxaloacetate extension and product release to generate a tricarboxylic acid containing product. The phenylalanine ammonia lyase (PAL) M7 and the acyl-CoA ligase M9 are involved in transforming phenylalanine into benzoyl-CoA. The citrate synthase-like protein R3 is involved in connecting the C-alpha-carbons of the hexaketide chain and oxaloacetate to afford the tricarboxylic acid unit. The potential hydrolytic enzymes, M8 and M10, are in close proximity to pks2 and may participate in product release. On the other side, the tetraketide arm is synthesized by a the squalestatin tetraketide synthase pks1 and enzymatically esterified to the core in the last biosynthetic step, by the acetyltransferase M4. The biosynthesis of the tetraketide must involve 3 rounds of chain extension. After the first and second rounds methyl-transfer occurs, and in all rounds of extension the ketoreductase and dehydratase are active. The enoyl reductase and C-MeT of pks1 are not active in the final round of extension. The acetyltransferase M4 appears to have a broad substrate selectivity for its acyl CoA substrate, allowing the in vitro synthesis of novel squalestatins. The biosynthesis of SQS1 requires several oxidative steps likely performed by oxidoreductases M1, R1 and R2. Finally, in support of the identification of the cluster as being responsible for SQS1 production, the cluster contains a gene encoding a putative squalene synthase (SS) R6, suggesting a likely mechanism for self-resistance. In Phoma sp. (strain ATCC 20986 / MF5453), this protein is NADP-dependent dehydrogenase M3.